Consider the following 159-residue polypeptide: Ribosomal RNA large subunit methyltransferase H (159 aa).

S-adenosyl-L-methionine is bound by residues L76, G108, and 127–132 (FSKMTL).

The protein belongs to the RNA methyltransferase RlmH family. As to quaternary structure, homodimer.

It is found in the cytoplasm. It catalyses the reaction pseudouridine(1915) in 23S rRNA + S-adenosyl-L-methionine = N(3)-methylpseudouridine(1915) in 23S rRNA + S-adenosyl-L-homocysteine + H(+). Functionally, specifically methylates the pseudouridine at position 1915 (m3Psi1915) in 23S rRNA. This is Ribosomal RNA large subunit methyltransferase H from Bacillus anthracis (strain CDC 684 / NRRL 3495).